The following is a 158-amino-acid chain: NAD(P)H-quinone oxidoreductase subunit J, chloroplastic (158 aa).

It belongs to the complex I 30 kDa subunit family. NDH is composed of at least 16 different subunits, 5 of which are encoded in the nucleus.

Its subcellular location is the plastid. The protein resides in the chloroplast thylakoid membrane. It catalyses the reaction a plastoquinone + NADH + (n+1) H(+)(in) = a plastoquinol + NAD(+) + n H(+)(out). It carries out the reaction a plastoquinone + NADPH + (n+1) H(+)(in) = a plastoquinol + NADP(+) + n H(+)(out). In terms of biological role, NDH shuttles electrons from NAD(P)H:plastoquinone, via FMN and iron-sulfur (Fe-S) centers, to quinones in the photosynthetic chain and possibly in a chloroplast respiratory chain. The immediate electron acceptor for the enzyme in this species is believed to be plastoquinone. Couples the redox reaction to proton translocation, and thus conserves the redox energy in a proton gradient. This is NAD(P)H-quinone oxidoreductase subunit J, chloroplastic from Nasturtium officinale (Watercress).